A 95-amino-acid chain; its full sequence is Aspartyl/glutamyl-tRNA(Asn/Gln) amidotransferase subunit C (95 aa).

The protein belongs to the GatC family. Heterotrimer of A, B and C subunits.

The catalysed reaction is L-glutamyl-tRNA(Gln) + L-glutamine + ATP + H2O = L-glutaminyl-tRNA(Gln) + L-glutamate + ADP + phosphate + H(+). It catalyses the reaction L-aspartyl-tRNA(Asn) + L-glutamine + ATP + H2O = L-asparaginyl-tRNA(Asn) + L-glutamate + ADP + phosphate + 2 H(+). In terms of biological role, allows the formation of correctly charged Asn-tRNA(Asn) or Gln-tRNA(Gln) through the transamidation of misacylated Asp-tRNA(Asn) or Glu-tRNA(Gln) in organisms which lack either or both of asparaginyl-tRNA or glutaminyl-tRNA synthetases. The reaction takes place in the presence of glutamine and ATP through an activated phospho-Asp-tRNA(Asn) or phospho-Glu-tRNA(Gln). This Halothermothrix orenii (strain H 168 / OCM 544 / DSM 9562) protein is Aspartyl/glutamyl-tRNA(Asn/Gln) amidotransferase subunit C.